The following is a 201-amino-acid chain: Small ribosomal subunit protein uS4c (201 aa).

Positions 15-44 (LGALPGLTSKRPKTGNDLKNQSRSGKKSQY) are disordered. Residues 89 to 150 (MRLDNILFRL…EKKSRTLIQN (62 aa)) form the S4 RNA-binding domain.

This sequence belongs to the universal ribosomal protein uS4 family. Part of the 30S ribosomal subunit. Contacts protein S5. The interaction surface between S4 and S5 is involved in control of translational fidelity.

The protein localises to the plastid. Its subcellular location is the chloroplast. In terms of biological role, one of the primary rRNA binding proteins, it binds directly to 16S rRNA where it nucleates assembly of the body of the 30S subunit. Its function is as follows. With S5 and S12 plays an important role in translational accuracy. This Cucumis sativus (Cucumber) protein is Small ribosomal subunit protein uS4c (rps4).